The primary structure comprises 404 residues: S-adenosylmethionine synthase (404 aa).

G141–D146 is a binding site for ATP.

This sequence belongs to the AdoMet synthase 2 family. The cofactor is Mg(2+).

It carries out the reaction L-methionine + ATP + H2O = S-adenosyl-L-methionine + phosphate + diphosphate. It participates in amino-acid biosynthesis; S-adenosyl-L-methionine biosynthesis; S-adenosyl-L-methionine from L-methionine: step 1/1. In terms of biological role, catalyzes the formation of S-adenosylmethionine from methionine and ATP. The sequence is that of S-adenosylmethionine synthase from Methanococcus vannielii (strain ATCC 35089 / DSM 1224 / JCM 13029 / OCM 148 / SB).